A 230-amino-acid polypeptide reads, in one-letter code: Bidirectional sugar transporter SWEET2b (230 aa).

Over 1–6 the chain is Extracellular; that stretch reads MDSLYD. Residues 7 to 27 traverse the membrane as a helical segment; the sequence is ISCFAAGLAGNIFALALFLSP. A MtN3/slv 1 domain is found at 13 to 98; that stretch reads GLAGNIFALA…CLFIFYADSR (86 aa). The Cytoplasmic portion of the chain corresponds to 28-45; that stretch reads VTTFKRILKAKSTERFDG. A helical transmembrane segment spans residues 46–66; sequence LPYLFSLLNCLICLWYGLPWV. At 67-72 the chain is on the extracellular side; it reads ADGRLL. A helical transmembrane segment spans residues 73–93; sequence VATVNGIGAVFQLAYICLFIF. Residues 94–103 are Cytoplasmic-facing; the sequence is YADSRKTRMK. A helical membrane pass occupies residues 104-124; that stretch reads IIGLLVLVVCGFALVSHASVF. The Extracellular segment spans residues 125–137; sequence FFDQPLRQQFVGA. The MtN3/slv 2 domain occupies 133 to 217; that stretch reads QFVGAVSMAS…LALYAYYSRK (85 aa). The chain crosses the membrane as a helical span at residues 138–158; the sequence is VSMASLISMFASPLAVMGVVI. At 159–167 the chain is on the cytoplasmic side; the sequence is RSESVEFMP. The helical transmembrane segment at 168-188 threads the bilayer; the sequence is FYLSLSTFLMSASFALYGLLL. The Extracellular portion of the chain corresponds to 189 to 190; sequence RD. A helical transmembrane segment spans residues 191–211; the sequence is FFIYFPNGLGLILGAMQLALY. Residues 212 to 230 are Cytoplasmic-facing; it reads AYYSRKWRGQDSSAPLLLA.

It belongs to the SWEET sugar transporter family. In terms of assembly, forms homooligomers and/or heterooligomers.

It localises to the cell membrane. Functionally, mediates both low-affinity uptake and efflux of sugar across the plasma membrane. In Oryza sativa subsp. indica (Rice), this protein is Bidirectional sugar transporter SWEET2b (SWEET2B).